Reading from the N-terminus, the 272-residue chain is Granaticin polyketide synthase putative ketoacyl reductase 1 (272 aa).

21 to 45 (LVTGATSGIGLAIARRLAALGARTF) serves as a coordination point for NAD(+). Serine 155 provides a ligand contact to substrate. Tyrosine 168 (proton acceptor) is an active-site residue.

The protein belongs to the short-chain dehydrogenases/reductases (SDR) family.

It functions in the pathway antibiotic biosynthesis; granaticin biosynthesis. The protein is Granaticin polyketide synthase putative ketoacyl reductase 1 (gra-orf5) of Streptomyces violaceoruber.